Reading from the N-terminus, the 511-residue chain is Cobyric acid synthase (511 aa).

Residues 251–443 (LLDIAIICLP…IHGIFDNDVF (193 aa)) form the GATase cobBQ-type domain. The active-site Nucleophile is the C332. H435 is a catalytic residue.

It belongs to the CobB/CobQ family. CobQ subfamily.

Its pathway is cofactor biosynthesis; adenosylcobalamin biosynthesis. Catalyzes amidations at positions B, D, E, and G on adenosylcobyrinic A,C-diamide. NH(2) groups are provided by glutamine, and one molecule of ATP is hydrogenolyzed for each amidation. This Listeria monocytogenes serovar 1/2a (strain ATCC BAA-679 / EGD-e) protein is Cobyric acid synthase.